The primary structure comprises 69 residues: Ferredoxin-1 (69 aa).

Cys-12, Cys-18, and Cys-57 together coordinate [3Fe-4S] cluster.

[3Fe-4S] cluster serves as cofactor.

Its function is as follows. Electron transport protein for the cytochrome P-450-SU1 system. The sequence is that of Ferredoxin-1 (suaB) from Streptomyces griseolus.